Consider the following 580-residue polypeptide: Formate--tetrahydrofolate ligase (580 aa).

65–72 (TPHGEGKT) provides a ligand contact to ATP.

Belongs to the formate--tetrahydrofolate ligase family.

It carries out the reaction (6S)-5,6,7,8-tetrahydrofolate + formate + ATP = (6R)-10-formyltetrahydrofolate + ADP + phosphate. It participates in one-carbon metabolism; tetrahydrofolate interconversion. This is Formate--tetrahydrofolate ligase from Shewanella baltica (strain OS223).